A 192-amino-acid chain; its full sequence is Protein SHORT HYPOCOTYL IN WHITE LIGHT 1 (192 aa).

The Nuclear localization signal motif lies at 43-50 (FRRLNRSL). A disordered region spans residues 70 to 92 (GGDNYDVVPDDDGFSDDDDEEDE). Positions 77-92 (VPDDDGFSDDDDEEDE) are enriched in acidic residues. Transmembrane regions (helical) follow at residues 122–142 (ILPA…ILLL) and 159–179 (GGTV…ASFF).

As to quaternary structure, interacts with HY5 and COP1 in the nucleus. As to expression, expressed in young seedlings (e.g. hypocotyl and cotyledons) and in green tissues (e.g. leaves, stems, sepals, and young siliques).

It is found in the nucleus membrane. Its function is as follows. Negative regulator of photomorphogenesis modulating both light and abscisic acid (ABA) signaling pathways. Negatively regulates the light-mediated inhibition of hypocotyl elongation, probably in a PHYB-mediated signaling pathway, but promotes flowering time (especially in long days) and lateral root formation. Enhances light-regulated gene expression. Promotes COP1-mediated degradation of HY5 during seedling development (e.g. hypocotyl growth) through enhanced ubiquitination in the darkness. Also involved in root gravitropism. In Arabidopsis thaliana (Mouse-ear cress), this protein is Protein SHORT HYPOCOTYL IN WHITE LIGHT 1.